The sequence spans 489 residues: Inactive receptor-like serine/threonine-protein kinase At2g40270 (489 aa).

The first 23 residues, 1–23, serve as a signal peptide directing secretion; the sequence is MLFKMRSFVAFVLLLSWFGSCCS. Residues 24 to 139 are Extracellular-facing; sequence LKDQAVDFLK…PRNSHSSVPL (116 aa). The disordered stretch occupies residues 67-130; that stretch reads KDLPSRKDRK…SAPLANSPIP (64 aa). The segment covering 81–90 has biased composition (low complexity); that stretch reads AATTTPSSSP. The span at 99–116 shows a compositional bias: polar residues; that stretch reads TKASTVSEPQKRSSTQDV. Residues 117–130 are compositionally biased toward low complexity; it reads SPSPSAPLANSPIP. The helical transmembrane segment at 140 to 160 threads the bilayer; it reads VVGCVGGAFFLLLVATGLYFF. At 161-489 the chain is on the cytoplasmic side; that stretch reads TSKAGKTVNP…WAELEVLSTA (329 aa). Residues 200 to 460 enclose the Protein kinase domain; sequence EDFSNVIGSC…PTMQEVTGWL (261 aa).

It belongs to the protein kinase superfamily. Ser/Thr protein kinase family.

Its subcellular location is the cell membrane. The protein is Inactive receptor-like serine/threonine-protein kinase At2g40270 of Arabidopsis thaliana (Mouse-ear cress).